A 180-amino-acid polypeptide reads, in one-letter code: Protein SPO16 homolog (180 aa).

In terms of assembly, homooligomer. Interacts with SHOC, SYCP1 and SYCE3.

The protein resides in the chromosome. Plays a key role in reinforcing the integrity of the central element of the synaptonemal complex (SC) thereby stabilizing SC, ensuring progression of meiotic prophase I in male and female germ cells. Promotes homologous recombination and crossing-over in meiotic prophase I via its association with SHOC1. Required for the localization of TEX11 and MSH4 to recombination intermediates. The sequence is that of Protein SPO16 homolog from Homo sapiens (Human).